Reading from the N-terminus, the 279-residue chain is uncharacterized protein (279 aa).

Helical transmembrane passes span 29-49 (PYNM…ALVF), 77-97 (VLYA…GTSL), 105-125 (WTKM…IIVT), 147-167 (VLGI…TGAV), 186-206 (TIGP…AIAF), and 240-260 (PIAG…VEMV).

This sequence belongs to the DcuC/DcuD transporter (TC 2.A.61) family.

It localises to the cell membrane. This is an uncharacterized protein from Haemophilus influenzae (strain ATCC 51907 / DSM 11121 / KW20 / Rd).